Consider the following 503-residue polypeptide: Aspartyl/glutamyl-tRNA(Asn/Gln) amidotransferase subunit B (503 aa).

The protein belongs to the GatB/GatE family. GatB subfamily. Heterotrimer of A, B and C subunits.

It carries out the reaction L-glutamyl-tRNA(Gln) + L-glutamine + ATP + H2O = L-glutaminyl-tRNA(Gln) + L-glutamate + ADP + phosphate + H(+). The catalysed reaction is L-aspartyl-tRNA(Asn) + L-glutamine + ATP + H2O = L-asparaginyl-tRNA(Asn) + L-glutamate + ADP + phosphate + 2 H(+). In terms of biological role, allows the formation of correctly charged Asn-tRNA(Asn) or Gln-tRNA(Gln) through the transamidation of misacylated Asp-tRNA(Asn) or Glu-tRNA(Gln) in organisms which lack either or both of asparaginyl-tRNA or glutaminyl-tRNA synthetases. The reaction takes place in the presence of glutamine and ATP through an activated phospho-Asp-tRNA(Asn) or phospho-Glu-tRNA(Gln). In Nocardia farcinica (strain IFM 10152), this protein is Aspartyl/glutamyl-tRNA(Asn/Gln) amidotransferase subunit B.